The primary structure comprises 122 residues: Large ribosomal subunit protein uL18 (122 aa).

It belongs to the universal ribosomal protein uL18 family. Part of the 50S ribosomal subunit; part of the 5S rRNA/L5/L18/L25 subcomplex. Contacts the 5S and 23S rRNAs.

Its function is as follows. This is one of the proteins that bind and probably mediate the attachment of the 5S RNA into the large ribosomal subunit, where it forms part of the central protuberance. This chain is Large ribosomal subunit protein uL18, found in Desulforapulum autotrophicum (strain ATCC 43914 / DSM 3382 / VKM B-1955 / HRM2) (Desulfobacterium autotrophicum).